The following is a 212-amino-acid chain: uncharacterized protein (212 aa).

Residues 1–18 (MIPLVALLVLLTLQASPG) form the signal peptide. The helical transmembrane segment at 186-208 (IYRLATFFMVSLFVGSFVALVFV) threads the bilayer.

The protein to A.fulgidus AF_0540.

It localises to the membrane. This is an uncharacterized protein from Archaeoglobus fulgidus (strain ATCC 49558 / DSM 4304 / JCM 9628 / NBRC 100126 / VC-16).